A 93-amino-acid chain; its full sequence is YcgL domain-containing protein Swoo_2115 (93 aa).

The YcgL domain occupies 1 to 85; it reads MICAVYKSRR…PVVNLLEEHK (85 aa).

The sequence is that of YcgL domain-containing protein Swoo_2115 from Shewanella woodyi (strain ATCC 51908 / MS32).